The chain runs to 205 residues: Large ribosomal subunit protein uL4 (205 aa).

The interval 45–97 is disordered; sequence RQGTSAVKNRSAVRGGGKKPWRQKGTGRARQGSIRAPQWRGGGTVFGPTPRSY. Positions 60–71 are enriched in basic residues; the sequence is GGKKPWRQKGTG.

This sequence belongs to the universal ribosomal protein uL4 family. Part of the 50S ribosomal subunit.

Its function is as follows. One of the primary rRNA binding proteins, this protein initially binds near the 5'-end of the 23S rRNA. It is important during the early stages of 50S assembly. It makes multiple contacts with different domains of the 23S rRNA in the assembled 50S subunit and ribosome. In terms of biological role, forms part of the polypeptide exit tunnel. The protein is Large ribosomal subunit protein uL4 of Lactobacillus gasseri (strain ATCC 33323 / DSM 20243 / BCRC 14619 / CIP 102991 / JCM 1131 / KCTC 3163 / NCIMB 11718 / NCTC 13722 / AM63).